We begin with the raw amino-acid sequence, 412 residues long: DnaJ homolog subfamily A member 2 (412 aa).

Residues 8 to 70 (KLYDILGVPP…EKRELYDRYG (63 aa)) enclose the J domain. An N6-acetyllysine modification is found at K39. A phosphoserine mark is found at S78 and S123. A CR-type zinc finger spans residues 130-214 (GKTTKLQLSK…CEGKKVIKEV (85 aa)). K134 is covalently cross-linked (Glycyl lysine isopeptide (Lys-Gly) (interchain with G-Cter in SUMO2)). C143 and C146 together coordinate Zn(2+). The stretch at 143–150 (CSACSGQG) is one CXXCXGXG motif repeat. At K152 the chain carries N6-acetyllysine. Positions 159, 162, 186, 189, 202, and 205 each coordinate Zn(2+). CXXCXGXG motif repeat units follow at residues 159–166 (CSACRGRG), 186–193 (CSDCNGEG), and 202–209 (CKKCEGKK). The interval 359–412 (PEVPNIIGDTEEVELQEFDSTRGSGGGQRREAYNDSSDEESSSHHGPGVQCAHQ) is disordered. Residue Y391 is modified to Phosphotyrosine. Phosphoserine occurs at positions 394 and 395. C409 bears the Cysteine methyl ester mark. C409 carries S-farnesyl cysteine lipidation. The propeptide at 410–412 (AHQ) is removed in mature form.

It localises to the membrane. Functionally, co-chaperone of Hsc70. Stimulates ATP hydrolysis and the folding of unfolded proteins mediated by HSPA1A/B (in vitro). This is DnaJ homolog subfamily A member 2 (DNAJA2) from Bos taurus (Bovine).